The primary structure comprises 500 residues: Cytochrome P450 71B34 (500 aa).

The helical transmembrane segment at 1–21 (MTNIWLLSLIFVICILVAVFN) threads the bilayer. Residue C440 participates in heme binding.

It belongs to the cytochrome P450 family. Heme is required as a cofactor.

Its subcellular location is the membrane. The chain is Cytochrome P450 71B34 (CYP71B34) from Arabidopsis thaliana (Mouse-ear cress).